Consider the following 600-residue polypeptide: NADH-quinone oxidoreductase subunit C/D (600 aa).

Positions 1–190 (MVNNMTDLTA…SPFELTKAKQ (190 aa)) are NADH dehydrogenase I subunit C. The interval 214–600 (DFMFLNLGPN…IDFVMSDVDR (387 aa)) is NADH dehydrogenase I subunit D.

It in the N-terminal section; belongs to the complex I 30 kDa subunit family. In the C-terminal section; belongs to the complex I 49 kDa subunit family. As to quaternary structure, NDH-1 is composed of 13 different subunits. Subunits NuoB, CD, E, F, and G constitute the peripheral sector of the complex.

The protein resides in the cell inner membrane. It catalyses the reaction a quinone + NADH + 5 H(+)(in) = a quinol + NAD(+) + 4 H(+)(out). Functionally, NDH-1 shuttles electrons from NADH, via FMN and iron-sulfur (Fe-S) centers, to quinones in the respiratory chain. The immediate electron acceptor for the enzyme in this species is believed to be ubiquinone. Couples the redox reaction to proton translocation (for every two electrons transferred, four hydrogen ions are translocated across the cytoplasmic membrane), and thus conserves the redox energy in a proton gradient. This is NADH-quinone oxidoreductase subunit C/D from Shigella boydii serotype 18 (strain CDC 3083-94 / BS512).